The chain runs to 430 residues: MLDIKRIRTETDAVEAALQRRGGAVDLNAFRALEGRKRTIQTEVEQLQSQRNTLSKEIGQRKAAREDASDLFEQMQRVGPRLKELESVLAELEGQVEAIIVALPNTPHSSVPDGLGEQDNVEVRRWSPSGGEGGDPQVLGFEAKNHWEIGEALGILDFEAGAAVAGSRFTVFKGVGARLSRALANYMLDLHTGSHGYQEILPPVLTNAECLFGTGQLPKFEEDLFRTRDDAYYMIPTAEVPVTNLVREQILEDSQLPMRMTAWTNCFRREAGSAGKDTRGLIRQHQFDKVELVQIRRPEESYAALEELTGHAEQVLKGLGLPFRTVVLCSGDMGFGASKTYDIEVWLPGQGKYREISSCSNTEDFQARRMKARFRREAKGKPELVHTLNGSGVAVGRALVAVLENYQQADGRVVVPEVLRPYMGGLEIIG.

An L-serine-binding site is contributed by 237 to 239 (TAE). Position 268-270 (268-270 (RRE)) interacts with ATP. Position 291 (E291) interacts with L-serine. ATP is bound at residue 355–358 (EISS). Position 391 (S391) interacts with L-serine.

Belongs to the class-II aminoacyl-tRNA synthetase family. Type-1 seryl-tRNA synthetase subfamily. In terms of assembly, homodimer. The tRNA molecule binds across the dimer.

The protein localises to the cytoplasm. It carries out the reaction tRNA(Ser) + L-serine + ATP = L-seryl-tRNA(Ser) + AMP + diphosphate + H(+). It catalyses the reaction tRNA(Sec) + L-serine + ATP = L-seryl-tRNA(Sec) + AMP + diphosphate + H(+). It participates in aminoacyl-tRNA biosynthesis; selenocysteinyl-tRNA(Sec) biosynthesis; L-seryl-tRNA(Sec) from L-serine and tRNA(Sec): step 1/1. In terms of biological role, catalyzes the attachment of serine to tRNA(Ser). Is also able to aminoacylate tRNA(Sec) with serine, to form the misacylated tRNA L-seryl-tRNA(Sec), which will be further converted into selenocysteinyl-tRNA(Sec). The chain is Serine--tRNA ligase from Magnetococcus marinus (strain ATCC BAA-1437 / JCM 17883 / MC-1).